A 196-amino-acid polypeptide reads, in one-letter code: UPF0056 membrane protein BUsg_434 (196 aa).

Helical transmembrane passes span 8–28, 45–65, 71–91, 105–125, 134–154, and 174–194; these read TILL…MTIL, IIAL…LTIL, TVSI…IFPS, FLVP…TLML, MPYL…ILLL, and MGLI…KAWF.

The protein belongs to the UPF0056 (MarC) family.

The protein resides in the cell membrane. The polypeptide is UPF0056 membrane protein BUsg_434 (Buchnera aphidicola subsp. Schizaphis graminum (strain Sg)).